A 95-amino-acid chain; its full sequence is MLKSNNASETVTHKVGDKTAKKVFFRRRKGCPLSVHNAPVIDYKNPELLIKFVSEGGRMLPSRITNVCAKKQRKLNNAIKIARILALLPFVFQAK.

This sequence belongs to the bacterial ribosomal protein bS18 family. In terms of assembly, part of the 30S ribosomal subunit. Forms a tight heterodimer with protein bS6.

Functionally, binds as a heterodimer with protein bS6 to the central domain of the 16S rRNA, where it helps stabilize the platform of the 30S subunit. The protein is Small ribosomal subunit protein bS18 of Rickettsia akari (strain Hartford).